We begin with the raw amino-acid sequence, 115 residues long: NAD(P)H-quinone oxidoreductase subunit M (115 aa).

Belongs to the complex I NdhM subunit family. In terms of assembly, NDH-1 can be composed of about 15 different subunits; different subcomplexes with different compositions have been identified which probably have different functions.

It localises to the cellular thylakoid membrane. The enzyme catalyses a plastoquinone + NADH + (n+1) H(+)(in) = a plastoquinol + NAD(+) + n H(+)(out). It carries out the reaction a plastoquinone + NADPH + (n+1) H(+)(in) = a plastoquinol + NADP(+) + n H(+)(out). Functionally, NDH-1 shuttles electrons from an unknown electron donor, via FMN and iron-sulfur (Fe-S) centers, to quinones in the respiratory and/or the photosynthetic chain. The immediate electron acceptor for the enzyme in this species is believed to be plastoquinone. Couples the redox reaction to proton translocation, and thus conserves the redox energy in a proton gradient. Cyanobacterial NDH-1 also plays a role in inorganic carbon-concentration. This Prochlorococcus marinus (strain NATL1A) protein is NAD(P)H-quinone oxidoreductase subunit M.